The sequence spans 149 residues: Transcriptional regulator MraZ (149 aa).

SpoVT-AbrB domains lie at 7–54 (KYIN…GIAH) and 83–126 (AVQL…QPQN).

Belongs to the MraZ family. As to quaternary structure, forms oligomers.

Its subcellular location is the cytoplasm. It localises to the nucleoid. This Rickettsia typhi (strain ATCC VR-144 / Wilmington) protein is Transcriptional regulator MraZ.